The chain runs to 533 residues: Ribonuclease III domain-containing protein RNC1, chloroplastic (533 aa).

Residues 1–30 (MAPPAMAFQALALGPLPLPLPAARRRRRVR) constitute a chloroplast transit peptide. Disordered stretches follow at residues 31-57 (VLAV…NSPS) and 66-85 (RKKA…ILKP). Over residues 39 to 53 (TPPPPPSPSSPPEPA) the composition is skewed to pro residues. Residues 69–82 (AVSPKKKHPPRRFI) are compositionally biased toward basic residues. RNase III domains follow at residues 164 to 279 (LLYL…LCFG) and 411 to 511 (EHPR…CVYG).

Interacts with RNA. Part of large ribonucleo-protein particles that contain CAF1 and/or CAF2.

Its subcellular location is the plastid. It localises to the chloroplast. Functionally, binds specific group II introns in chloroplasts and facilitates their splicing. Acts on both subgroup IIA and subgroup IIB introns. The substrates of the subgroup II also require the CRM domain proteins CAF1 or CAF2. Binds both single-stranded and double-stranded RNA non-specifically, but lacks endonuclease activity. Required for plastid ribosome biogenesis. The polypeptide is Ribonuclease III domain-containing protein RNC1, chloroplastic (Oryza sativa subsp. japonica (Rice)).